A 282-amino-acid chain; its full sequence is MENGFLLINKEQGKTSFETLFPIKKYFNTNRVGHAGTLDKFASGILVCLVGKYTKLSGYFTSLDKEYVAEFRFGLETDTLDPNGRIVSKTDYIPNVEDIDLKLKDFVGEIYQSPPRFSSVHIDGSRAYKLALNGKFFEIKKRKVTVYNIQRLSYDFSSSLLSLKISCSKGTYIRSIARDLAYSLNSCAYVSNLKRTKVGMFRLKDSTLCENLSKASLISLESLKSFEKVYIDSNKINLVKNGVYFEIEININEFKILKSREEKILAVIQGVGLNKYKYVIIF.

D39 functions as the Nucleophile in the catalytic mechanism.

It belongs to the pseudouridine synthase TruB family. Type 1 subfamily.

It catalyses the reaction uridine(55) in tRNA = pseudouridine(55) in tRNA. In terms of biological role, responsible for synthesis of pseudouridine from uracil-55 in the psi GC loop of transfer RNAs. This chain is tRNA pseudouridine synthase B, found in Borreliella burgdorferi (strain ATCC 35210 / DSM 4680 / CIP 102532 / B31) (Borrelia burgdorferi).